We begin with the raw amino-acid sequence, 252 residues long: Adenosylcobinamide-GDP ribazoletransferase (252 aa).

7 helical membrane passes run 4-24 (LFKGLMMSLSMFTIIPMPYVE), 38-58 (PIIGLIVGCVWFLGYKLINYL), 60-80 (ISIVLKSALIMIIPFIITGML), 113-133 (FSVISVIILFFIQFGAVHSFL), 141-161 (ILMFLPIISRNIVAYFFITII), 190-210 (LVCILFGSILGYIGIAILLIV), and 232-252 (VAGFSLVVGEIVGLFSACLFT).

This sequence belongs to the CobS family. Mg(2+) is required as a cofactor.

The protein resides in the cell membrane. The catalysed reaction is alpha-ribazole + adenosylcob(III)inamide-GDP = adenosylcob(III)alamin + GMP + H(+). The enzyme catalyses alpha-ribazole 5'-phosphate + adenosylcob(III)inamide-GDP = adenosylcob(III)alamin 5'-phosphate + GMP + H(+). Its pathway is cofactor biosynthesis; adenosylcobalamin biosynthesis; adenosylcobalamin from cob(II)yrinate a,c-diamide: step 7/7. Joins adenosylcobinamide-GDP and alpha-ribazole to generate adenosylcobalamin (Ado-cobalamin). Also synthesizes adenosylcobalamin 5'-phosphate from adenosylcobinamide-GDP and alpha-ribazole 5'-phosphate. This is Adenosylcobinamide-GDP ribazoletransferase from Clostridium botulinum (strain Alaska E43 / Type E3).